Consider the following 64-residue polypeptide: Potassium channel toxin alpha-KTx J123 (64 aa).

The N-terminal stretch at 1–21 (MNKVYLVAVLVLFLALTINES) is a signal peptide. 3 cysteine pairs are disulfide-bonded: Cys-30-Cys-52, Cys-37-Cys-60, and Cys-41-Cys-62.

It belongs to the short scorpion toxin superfamily. Potassium channel inhibitor family. Alpha-KTx 11 subfamily. In terms of tissue distribution, expressed by the venom gland.

The protein localises to the secreted. Functionally, this recombinant toxin inhibits mammalian voltage-gated potassium channels Kv1.3/KCNA3 (IC(50)=0.79 nM) and Kv1.2/KCNA2 (IC(50)=26.4 nM). In Olivierus martensii (Manchurian scorpion), this protein is Potassium channel toxin alpha-KTx J123.